The following is a 369-amino-acid chain: Phosphoribosyl pyrophosphate synthase-associated protein 2 (369 aa).

At Met1 the chain carries N-acetylmethionine. At Thr5 the chain carries Phosphothreonine. Residues Ser219, Ser227, and Ser233 each carry the phosphoserine modification.

It belongs to the ribose-phosphate pyrophosphokinase family. As to quaternary structure, binds to PRPS1 and PRPS2. As to expression, ubiquitous.

In terms of biological role, seems to play a negative regulatory role in 5-phosphoribose 1-diphosphate synthesis. The sequence is that of Phosphoribosyl pyrophosphate synthase-associated protein 2 (PRPSAP2) from Homo sapiens (Human).